Reading from the N-terminus, the 226-residue chain is Cytidylate kinase (226 aa).

Residue 10–18 (GPASSGKST) coordinates ATP.

The protein belongs to the cytidylate kinase family. Type 1 subfamily.

It is found in the cytoplasm. It carries out the reaction CMP + ATP = CDP + ADP. It catalyses the reaction dCMP + ATP = dCDP + ADP. In Streptococcus pyogenes serotype M28 (strain MGAS6180), this protein is Cytidylate kinase.